The following is a 271-amino-acid chain: Mannosyl-3-phosphoglycerate phosphatase (271 aa).

D13 (nucleophile) is an active-site residue. 3 residues coordinate Mg(2+): D13, D15, and D214.

This sequence belongs to the HAD-like hydrolase superfamily. MPGP family. Mg(2+) serves as cofactor.

Its subcellular location is the cytoplasm. The catalysed reaction is 2-O-(alpha-D-mannosyl)-3-phosphoglycerate + H2O = (2R)-2-O-(alpha-D-mannosyl)-glycerate + phosphate. The polypeptide is Mannosyl-3-phosphoglycerate phosphatase (Escherichia coli O139:H28 (strain E24377A / ETEC)).